The primary structure comprises 67 residues: Large ribosomal subunit protein eL24 (67 aa).

Zn(2+) is bound by residues Cys7, Cys10, Cys33, and Cys37. The C4-type zinc finger occupies 7–37 (CSYCGKPFEPGTGKMFVRNDGRVLFFCSRKC).

This sequence belongs to the eukaryotic ribosomal protein eL24 family. In terms of assembly, part of the 50S ribosomal subunit. Forms a cluster with proteins L3 and L14. The cofactor is Zn(2+).

Functionally, binds to the 23S rRNA. The polypeptide is Large ribosomal subunit protein eL24 (Pyrococcus abyssi (strain GE5 / Orsay)).